We begin with the raw amino-acid sequence, 362 residues long: Chorismate synthase (362 aa).

2 residues coordinate NADP(+): arginine 47 and arginine 53. FMN is bound by residues 124–126, glycine 285, 300–304, and arginine 326; these read RSS and KPTAT.

It belongs to the chorismate synthase family. As to quaternary structure, homotetramer. Requires FMNH2 as cofactor.

It carries out the reaction 5-O-(1-carboxyvinyl)-3-phosphoshikimate = chorismate + phosphate. It functions in the pathway metabolic intermediate biosynthesis; chorismate biosynthesis; chorismate from D-erythrose 4-phosphate and phosphoenolpyruvate: step 7/7. Its function is as follows. Catalyzes the anti-1,4-elimination of the C-3 phosphate and the C-6 proR hydrogen from 5-enolpyruvylshikimate-3-phosphate (EPSP) to yield chorismate, which is the branch point compound that serves as the starting substrate for the three terminal pathways of aromatic amino acid biosynthesis. This reaction introduces a second double bond into the aromatic ring system. The chain is Chorismate synthase from Cyanothece sp. (strain PCC 7425 / ATCC 29141).